The chain runs to 688 residues: Glycine--tRNA ligase beta subunit (688 aa).

It belongs to the class-II aminoacyl-tRNA synthetase family. As to quaternary structure, tetramer of two alpha and two beta subunits.

The protein resides in the cytoplasm. The catalysed reaction is tRNA(Gly) + glycine + ATP = glycyl-tRNA(Gly) + AMP + diphosphate. The protein is Glycine--tRNA ligase beta subunit of Listeria monocytogenes serovar 1/2a (strain ATCC BAA-679 / EGD-e).